The following is a 542-amino-acid chain: 4-coumarate--CoA ligase-like 5 (542 aa).

ATP is bound by residues S204, S205, G206, T207, T208, and K212. F262 contributes to the (E)-4-coumaroyl-AMP binding site. R282 is a binding site for CoA. The SBD1 stretch occupies residues 284–353; sequence DFIAALRAIE…SVFPNVELVQ (70 aa). Residues G331, Q353, G354, and T358 each contribute to the (E)-4-coumaroyl-AMP site. ATP-binding residues include Q353, G354, T358, D418, and R433. The segment at 354-397 is SBD2; the sequence is GYGLTESSGAVAATVGPEESKAYGSVGKLGSHLQAKIVDPSTGY. (E)-4-coumaroyl-AMP is bound by residues K435 and K439. CoA contacts are provided by K441 and G442. Residue K524 participates in ATP binding.

The protein belongs to the ATP-dependent AMP-binding enzyme family. It depends on Mg(2+) as a cofactor.

It catalyses the reaction (E)-4-coumarate + ATP + CoA = (E)-4-coumaroyl-CoA + AMP + diphosphate. The enzyme catalyses (E)-4-coumarate + ATP + H(+) = (E)-4-coumaroyl-AMP + diphosphate. It carries out the reaction (E)-4-coumaroyl-AMP + CoA = (E)-4-coumaroyl-CoA + AMP + H(+). Functionally, carboxylate--CoA ligase that may use 4-coumarate as substrate. Follows a two-step reaction mechanism, wherein the carboxylate substrate first undergoes adenylation by ATP, followed by a thioesterification in the presence of CoA to yield the final CoA thioester. The polypeptide is 4-coumarate--CoA ligase-like 5 (4CLL5) (Oryza sativa subsp. japonica (Rice)).